Here is a 320-residue protein sequence, read N- to C-terminus: Cytochrome f (320 aa).

Residues 1–35 (MQNRNTFSWVKEEMTRFISVSIMIYVITRTSISNA) form the signal peptide. Residues Tyr-36, Cys-56, Cys-59, and His-60 each coordinate heme. The helical transmembrane segment at 286–306 (VQGLLFFLASVILAQIFLVLK) threads the bilayer.

The protein belongs to the cytochrome f family. As to quaternary structure, the 4 large subunits of the cytochrome b6-f complex are cytochrome b6, subunit IV (17 kDa polypeptide, petD), cytochrome f and the Rieske protein, while the 4 small subunits are PetG, PetL, PetM and PetN. The complex functions as a dimer. Requires heme as cofactor.

It localises to the plastid. Its subcellular location is the chloroplast thylakoid membrane. Its function is as follows. Component of the cytochrome b6-f complex, which mediates electron transfer between photosystem II (PSII) and photosystem I (PSI), cyclic electron flow around PSI, and state transitions. This chain is Cytochrome f, found in Calycanthus floridus var. glaucus (Eastern sweetshrub).